A 297-amino-acid chain; its full sequence is MKQRTLKQPITVVGIGLHSGQDVTLTLQPSEVNTGIRFLRTDIEDAPLIAADAFLVTDTVMSSNLMVNGIKIGTVEHLLSALAGFGIDNLLIKVSDAEIPIMDGSAANYVTLLLEAGIEEQAAPKQFMKILKPVKVVEGDKWAQLEPYDGFSLDFEIDFNHPGIPKDTQRYRFEFSLHNYIENVGNARTFGFMRDIEHLQKNNLALGGSLDNAIVLDDNGIMNKEGLRHQEEFVRHKILDAIGDLYLAKYSLIGGFSAYKSGHALNNKLIREVYNDPNNFEIVTIYDTSSVARAYEI.

3 residues coordinate Zn(2+): histidine 77, histidine 236, and aspartate 240. Histidine 263 acts as the Proton donor in catalysis.

The protein belongs to the LpxC family. Requires Zn(2+) as cofactor.

The catalysed reaction is a UDP-3-O-[(3R)-3-hydroxyacyl]-N-acetyl-alpha-D-glucosamine + H2O = a UDP-3-O-[(3R)-3-hydroxyacyl]-alpha-D-glucosamine + acetate. It functions in the pathway glycolipid biosynthesis; lipid IV(A) biosynthesis; lipid IV(A) from (3R)-3-hydroxytetradecanoyl-[acyl-carrier-protein] and UDP-N-acetyl-alpha-D-glucosamine: step 2/6. In terms of biological role, catalyzes the hydrolysis of UDP-3-O-myristoyl-N-acetylglucosamine to form UDP-3-O-myristoylglucosamine and acetate, the committed step in lipid A biosynthesis. The protein is UDP-3-O-acyl-N-acetylglucosamine deacetylase of Psychrobacter sp. (strain PRwf-1).